Reading from the N-terminus, the 432-residue chain is Enolase (432 aa).

Q163 contributes to the (2R)-2-phosphoglycerate binding site. The active-site Proton donor is the E205. Positions 242, 289, and 316 each coordinate Mg(2+). The (2R)-2-phosphoglycerate site is built by K341, R370, S371, and K392. K341 acts as the Proton acceptor in catalysis.

It belongs to the enolase family. It depends on Mg(2+) as a cofactor. In terms of processing, probably phosphorylated.

Its subcellular location is the cytoplasm. It is found in the secreted. The protein localises to the cell surface. The enzyme catalyses (2R)-2-phosphoglycerate = phosphoenolpyruvate + H2O. It functions in the pathway carbohydrate degradation; glycolysis; pyruvate from D-glyceraldehyde 3-phosphate: step 4/5. Functionally, catalyzes the reversible conversion of 2-phosphoglycerate (2-PG) into phosphoenolpyruvate (PEP). It is essential for the degradation of carbohydrates via glycolysis. In terms of biological role, 'Moonlights' as a plasminogen receptor. Binds plasminogen and human salivary mucin MG2 when expressed on the bacterial cell surface, potentially allowing the bacterium to acquire surface-associated proteolytic activity that may help the dissemination through oral tissues and entrance into the blood stream. The polypeptide is Enolase (Streptococcus mutans serotype c (strain ATCC 700610 / UA159)).